Consider the following 471-residue polypeptide: Glutamate--tRNA ligase (471 aa).

The short motif at 9–19 is the 'HIGH' region element; that stretch reads PSPTGYLHVGG. 4 residues coordinate Zn(2+): Cys-98, Cys-100, Cys-125, and His-127. The 'KMSKS' region signature appears at 237–241; sequence KLSKR. Lys-240 contacts ATP.

Belongs to the class-I aminoacyl-tRNA synthetase family. Glutamate--tRNA ligase type 1 subfamily. Monomer. Zn(2+) serves as cofactor.

Its subcellular location is the cytoplasm. The catalysed reaction is tRNA(Glu) + L-glutamate + ATP = L-glutamyl-tRNA(Glu) + AMP + diphosphate. Functionally, catalyzes the attachment of glutamate to tRNA(Glu) in a two-step reaction: glutamate is first activated by ATP to form Glu-AMP and then transferred to the acceptor end of tRNA(Glu). The polypeptide is Glutamate--tRNA ligase (Escherichia coli (strain ATCC 8739 / DSM 1576 / NBRC 3972 / NCIMB 8545 / WDCM 00012 / Crooks)).